The following is a 916-amino-acid chain: Inter-alpha-trypsin inhibitor heavy chain H4 (916 aa).

The N-terminal stretch at 1 to 27 (MKTPAPGRIHSIVLVLLSLAVLQTSKA) is a signal peptide. The 122-residue stretch at 28–149 (QKVQNDIDIY…KVTFELVYEE (122 aa)) folds into the VIT domain. N-linked (GlcNAc...) asparagine glycans are attached at residues Asn-82 and Asn-208. The 184-residue stretch at 275–458 (NVIFVIDKSG…LQLQDFYQEV (184 aa)) folds into the VWFA domain. Asn-518 is a glycosylation site (N-linked (GlcNAc...) asparagine). 2 disordered regions span residues 597–616 (PEGQEQSQVAEKPVEDESRG) and 678–701 (PLAPASAPSPTSGPGGASHDTDFR). Residues 678–689 (PLAPASAPSPTS) show a composition bias toward low complexity. Ser-683 carries an O-linked (GalNAc...) serine glycan. 3 O-linked (GalNAc...) threonine glycosylation sites follow: Thr-705, Thr-706, and Thr-708. Cys-733 and Cys-911 form a disulfide bridge.

Belongs to the ITIH family. In terms of assembly, interacts (via C-terminus) with DNAJC1 (via SANT 2 domain). Post-translationally, appears to be both N- and O-glycosylated.

The protein resides in the secreted. Type II acute-phase protein (APP) involved in inflammatory responses to trauma. May also play a role in liver development or regeneration. This chain is Inter-alpha-trypsin inhibitor heavy chain H4 (ITIH4), found in Bos taurus (Bovine).